Here is a 448-residue protein sequence, read N- to C-terminus: Deoxyguanosinetriphosphate triphosphohydrolase-like protein (448 aa).

The HD domain maps to 67–260; it reads RLTHSLEVSQ…MELADDIAYG (194 aa).

Belongs to the dGTPase family. Type 2 subfamily.

The sequence is that of Deoxyguanosinetriphosphate triphosphohydrolase-like protein from Aliivibrio fischeri (strain MJ11) (Vibrio fischeri).